A 126-amino-acid polypeptide reads, in one-letter code: Aspartate 1-decarboxylase (126 aa).

The active-site Schiff-base intermediate with substrate; via pyruvic acid is the Ser25. Ser25 bears the Pyruvic acid (Ser) mark. Substrate is bound at residue Thr57. Residue Tyr58 is the Proton donor of the active site. Substrate is bound at residue 73–75; that stretch reads GGA.

Belongs to the PanD family. As to quaternary structure, heterooctamer of four alpha and four beta subunits. Pyruvate is required as a cofactor. Is synthesized initially as an inactive proenzyme, which is activated by self-cleavage at a specific serine bond to produce a beta-subunit with a hydroxyl group at its C-terminus and an alpha-subunit with a pyruvoyl group at its N-terminus.

Its subcellular location is the cytoplasm. The enzyme catalyses L-aspartate + H(+) = beta-alanine + CO2. It participates in cofactor biosynthesis; (R)-pantothenate biosynthesis; beta-alanine from L-aspartate: step 1/1. Functionally, catalyzes the pyruvoyl-dependent decarboxylation of aspartate to produce beta-alanine. The protein is Aspartate 1-decarboxylase of Acinetobacter baumannii (strain ACICU).